Consider the following 710-residue polypeptide: ARM REPEAT PROTEIN INTERACTING WITH ABF2 (710 aa).

A disordered region spans residues 1–35 (MDQQPERREGRSFPERKGQKRKLEEGAAAVEDREI). ARM repeat units lie at residues 85–127 (EDLV…EKGS), 138–185 (PEYQ…NLAH), 188–227 (SSIK…TLAF), 230–269 (DDNK…NLVH), 272–311 (PHIK…QFAS), 314–353 (SDCK…RLAQ), 355–394 (AHNQ…GLAD), 429–468 (LKRL…HLCS), and 470–509 (EDQR…KLAN). Residues 541-608 (SDVTFLVEGR…IYTGSVDITN (68 aa)) enclose the BTB domain.

In terms of assembly, interacts with ABF2. Interacts with DUF7/AIP1. As to expression, detected in embryos and most of the vegetative and reproductive organs.

It is found in the nucleus. It functions in the pathway protein modification; protein ubiquitination. Its function is as follows. May act as a substrate-specific adapter of an E3 ubiquitin-protein ligase complex (CUL3-RBX1-BTB) which mediates the ubiquitination and subsequent proteasomal degradation of target proteins. Acts as a positive regulator of ABA response via the modulation of the transcriptional activity of ABF2, a transcription factor which controls ABA-dependent gene expression via the G-box-type ABA-responsive elements. Negative regulator of seed germination and young seedling growth. The protein is ARM REPEAT PROTEIN INTERACTING WITH ABF2 (ARIA) of Arabidopsis thaliana (Mouse-ear cress).